A 711-amino-acid chain; its full sequence is Ferric/cupric reductase transmembrane component 2 (711 aa).

Residues 1-23 (MHWTSILSAILLFCLSGARASPA) form the signal peptide. Over 24 to 164 (KTVIRNKVPL…GFYANLDVGN (141 aa)) the chain is Extracellular. N-linked (GlcNAc...) asparagine glycans are attached at residues Asn85, Asn108, Asn120, and Asn134. A helical transmembrane segment spans residues 165 to 185 (IYGGIICAYFVAIMAFAGVLH). Residues 186-235 (CMNYTPFKTVLLKQKLVGYVRGYLTLPTIGSKHASDFSYFRIFTGYLPTR) lie on the Cytoplasmic side of the membrane. Residues 236-256 (LEGIIILGYLVLHTVFLAYGY) form a helical membrane-spanning segment. The Extracellular portion of the chain corresponds to 257 to 280 (EYDPENIIFKSRRVQVARYVADRS). The region spanning 280–414 (SGVLAFAHFP…SGIEWIYTAI (135 aa)) is the Ferric oxidoreductase domain. The chain crosses the membrane as a helical span at residues 281–301 (GVLAFAHFPLIVLFAGRNNFL). Residues 302 to 317 (EYISGVKYTSFIMFHK) are Cytoplasmic-facing. The heme site is built by His316 and His330. A helical transmembrane segment spans residues 318–340 (WLGRMMFLDAMIHGSAYTSYTVA). Asn341 carries an N-linked (GlcNAc...) asparagine glycan. Residues 341 to 353 (NKTWATSKNRLYW) are Extracellular-facing. The helical transmembrane segment at 354–374 (QFGVAALCLAGTMVFFSFAVF) threads the bilayer. The Cytoplasmic portion of the chain corresponds to 375 to 377 (RKY). A helical membrane pass occupies residues 378 to 398 (FYEAFLFLHIVLGAMFFYACW). Residues His386 and His400 each contribute to the heme site. Over 399–400 (EH) the chain is Extracellular. Residues 401 to 423 (VVSLSGIEWIYTAIAIWIVDRII) traverse the membrane as a helical segment. The region spanning 415-534 (AIWIVDRIIR…EGPYGSSSPV (120 aa)) is the FAD-binding FR-type domain. The Cytoplasmic portion of the chain corresponds to 424–711 (RIIKASYFGF…IEYFEEYQCW (288 aa)). An FAD-binding site is contributed by 479-485 (HPFTVLD). NADP(+) is bound by residues 526–529 (GPYG) and 677–678 (CG).

The protein belongs to the ferric reductase (FRE) family. FAD is required as a cofactor. Requires heme as cofactor.

It is found in the cell membrane. The catalysed reaction is 2 a Fe(II)-siderophore + NADP(+) + H(+) = 2 a Fe(III)-siderophore + NADPH. In terms of biological role, metalloreductase responsible for reducing extracellular iron and copper prior to import. Catalyzes the reductive uptake of Fe(3+)-salts and Fe(3+) bound to catecholate or hydroxamate siderophores. Fe(3+) is reduced to Fe(2+), which then dissociates from the siderophore and can be imported by the high-affinity Fe(2+) transport complex in the plasma membrane. Also participates in Cu(2+) reduction and Cu(+) uptake. This is Ferric/cupric reductase transmembrane component 2 (FRE2) from Saccharomyces cerevisiae (strain ATCC 204508 / S288c) (Baker's yeast).